A 224-amino-acid chain; its full sequence is Putative cytochrome c-type biogenesis protein DbsD-like (224 aa).

Helical transmembrane passes span 32-52, 74-94, 104-124, 150-170, and 176-196; these read FIFL…ILPV, FLFC…ATLI, GIPT…LNIV, GIGI…LVWI, and IFTG…PIII.

Belongs to the DsbD family.

It localises to the plastid. The protein localises to the chloroplast membrane. Could be involved in cytochrome c synthesis. The protein is Putative cytochrome c-type biogenesis protein DbsD-like of Pyropia yezoensis (Susabi-nori).